A 325-amino-acid chain; its full sequence is BTB/POZ domain-containing protein KCTD12 (325 aa).

The interval Met-1–Glu-28 is disordered. The residue at position 2 (Ala-2) is an N-acetylalanine. Positions Pro-11–Gly-21 are enriched in gly residues. Tyr-119 is modified (phosphotyrosine). Positions Leu-129–Asp-202 are disordered. A phosphoserine mark is found at Ser-151, Ser-171, and Ser-185. At Thr-196 the chain carries Phosphothreonine. The residue at position 200 (Ser-200) is a Phosphoserine.

In terms of assembly, interacts as a tetramer with GABBR1 and GABBR2. As to expression, present in a variety of fetal organs, with highest expression levels in the cochlea and brain and, in stark contrast, is detected only at extremely low levels in adult organs, such as brain and lung.

It localises to the presynaptic cell membrane. The protein resides in the postsynaptic cell membrane. In terms of biological role, auxiliary subunit of GABA-B receptors that determine the pharmacology and kinetics of the receptor response. Increases agonist potency and markedly alter the G-protein signaling of the receptors by accelerating onset and promoting desensitization. In Homo sapiens (Human), this protein is BTB/POZ domain-containing protein KCTD12 (KCTD12).